The following is a 497-amino-acid chain: Bypass of stop codon protein 6 (497 aa).

At 1 to 72 (MDASSVPPKV…KVKTYPLNYQ (72 aa)) the chain is on the lumenal side. Phosphoserine occurs at positions 37 and 41. An N-linked (GlcNAc...) asparagine glycan is attached at Asn49. Residues 73–93 (TVPLVKLQVIACLIMFVVFGM) form a helical membrane-spanning segment. The Cytoplasmic portion of the chain corresponds to 94–144 (NDQTVGALLPTLIEYYHISRVDVSNVFIVQLCGYVMASLSKERLNKHFGMR). A helical transmembrane segment spans residues 145 to 165 (GGMLLAAGLCIVFLIILATAP). Topologically, residues 166 to 167 (SS) are lumenal. The helical transmembrane segment at 168–188 (FYVCMFCGLPLGLGIGILDST) threads the bilayer. Residues 189–205 (GNVLMGSLLVHKNELMG) lie on the Cytoplasmic side of the membrane. A helical transmembrane segment spans residues 206-226 (IMHGLYGAAAMVTPPLVSYFV). Residues 227 to 232 (EWGHWS) are Lumenal-facing. A helical transmembrane segment spans residues 233-253 (LFFLIPLFFSIIGMIVIFPAF). The Cytoplasmic segment spans residues 254 to 300 (KFETASKYDYLCSVENKESNNDVEEAGDNSLMESTKASPGFFELLRN). A helical transmembrane segment spans residues 301–321 (PAIFLYSLYLFLYLGAEITTG). At 322–340 (SWFFSYLLETKSSNKVAMS) the chain is on the lumenal side. A helical membrane pass occupies residues 341 to 361 (YIAASFWTGLTVGRLCLGFVT). Topologically, residues 362 to 373 (ERFFENEYKASK) are cytoplasmic. A helical membrane pass occupies residues 374-394 (AYAFLTLSSYTLFVLVGLINS). The Lumenal segment spans residues 395 to 397 (SSV). The helical transmembrane segment at 398-418 (FYFVVLFFVVFCCGTFIGPLF) threads the bilayer. At 419-439 (PNASIVALQVLPKRLHVSGVG) the chain is on the cytoplasmic side. Residues 440–460 (VAVAVGGCGGAAIPYLAGVIA) traverse the membrane as a helical segment. The Lumenal segment spans residues 461–462 (HT). Residues 463-483 (VGIQYIPLLCWIMVALFTLEW) traverse the membrane as a helical segment. At 484–497 (TLYPKFIKGHEEYF) the chain is on the cytoplasmic side.

This sequence belongs to the major facilitator superfamily.

It localises to the golgi apparatus. The protein resides in the cis-Golgi network membrane. In terms of biological role, probable transporter. In Saccharomyces cerevisiae (strain ATCC 204508 / S288c) (Baker's yeast), this protein is Bypass of stop codon protein 6 (BSC6).